The sequence spans 506 residues: Maturase K (506 aa).

The protein belongs to the intron maturase 2 family. MatK subfamily.

Its subcellular location is the plastid. It localises to the chloroplast. Usually encoded in the trnK tRNA gene intron. Probably assists in splicing its own and other chloroplast group II introns. The polypeptide is Maturase K (Artanema fimbriatum).